The chain runs to 551 residues: uncharacterized protein (551 aa).

Positions 1–11 are enriched in polar residues; sequence MRRVSLPNQLN. 2 disordered regions span residues 1 to 22 and 523 to 551; these read MRRV…TRGE and CDPT…QAFH. Basic and acidic residues predominate over residues 12 to 22; that stretch reads ETRRRSPTRGE. Over residues 537 to 551 the composition is skewed to low complexity; it reads QQPQQQQQQQQQAFH.

It to Synechocystis PCC 6803 sll0335 and to M.tuberculosis Rv2567.

This is an uncharacterized protein from Mycobacterium bovis (strain ATCC BAA-935 / AF2122/97).